The sequence spans 240 residues: Dihydromonapterin reductase (240 aa).

The Proton acceptor role is filled by Tyr-152.

It belongs to the short-chain dehydrogenases/reductases (SDR) family. FolM subfamily.

It carries out the reaction (6S)-5,6,7,8-tetrahydrofolate + NADP(+) = 7,8-dihydrofolate + NADPH + H(+). The catalysed reaction is 7,8-dihydromonapterin + NADPH + H(+) = 5,6,7,8-tetrahydromonapterin + NADP(+). Catalyzes the reduction of dihydromonapterin to tetrahydromonapterin. Also has lower activity with dihydrofolate. This is Dihydromonapterin reductase (folM) from Escherichia coli O1:K1 / APEC.